A 247-amino-acid polypeptide reads, in one-letter code: Ubiquinone biosynthesis O-methyltransferase (247 aa).

Residues Arg-39, Gly-70, Asp-91, and Met-134 each coordinate S-adenosyl-L-methionine.

It belongs to the methyltransferase superfamily. UbiG/COQ3 family.

It catalyses the reaction a 3-demethylubiquinol + S-adenosyl-L-methionine = a ubiquinol + S-adenosyl-L-homocysteine + H(+). It carries out the reaction a 3-(all-trans-polyprenyl)benzene-1,2-diol + S-adenosyl-L-methionine = a 2-methoxy-6-(all-trans-polyprenyl)phenol + S-adenosyl-L-homocysteine + H(+). It functions in the pathway cofactor biosynthesis; ubiquinone biosynthesis. O-methyltransferase that catalyzes the 2 O-methylation steps in the ubiquinone biosynthetic pathway. In Cereibacter sphaeroides (strain ATCC 17025 / ATH 2.4.3) (Rhodobacter sphaeroides), this protein is Ubiquinone biosynthesis O-methyltransferase.